The following is a 255-amino-acid chain: Putative cysteine-rich repeat secretory protein 13 (255 aa).

The first 21 residues, 1-21 (MSSNILAMVAMQLLLIRIVSS), serve as a signal peptide directing secretion. Gnk2-homologous domains are found at residues 28–136 (YLNH…SVNT) and 142–252 (YDSF…LYPF).

This sequence belongs to the cysteine-rich repeat secretory protein family.

The protein localises to the secreted. This chain is Putative cysteine-rich repeat secretory protein 13 (CRRSP13), found in Arabidopsis thaliana (Mouse-ear cress).